A 37-amino-acid chain; its full sequence is MKVRASVKKVCRHCKVVRRKGVVRVICKDARHKQRQG.

It belongs to the bacterial ribosomal protein bL36 family.

The sequence is that of Large ribosomal subunit protein bL36 from Nitrosococcus oceani (strain ATCC 19707 / BCRC 17464 / JCM 30415 / NCIMB 11848 / C-107).